A 177-amino-acid polypeptide reads, in one-letter code: Peptidyl-tRNA hydrolase (177 aa).

Tyrosine 14 contacts tRNA. Histidine 19 serves as the catalytic Proton acceptor. Phenylalanine 64, asparagine 66, and asparagine 112 together coordinate tRNA.

Belongs to the PTH family. Monomer.

It is found in the cytoplasm. It carries out the reaction an N-acyl-L-alpha-aminoacyl-tRNA + H2O = an N-acyl-L-amino acid + a tRNA + H(+). Hydrolyzes ribosome-free peptidyl-tRNAs (with 1 or more amino acids incorporated), which drop off the ribosome during protein synthesis, or as a result of ribosome stalling. Functionally, catalyzes the release of premature peptidyl moieties from peptidyl-tRNA molecules trapped in stalled 50S ribosomal subunits, and thus maintains levels of free tRNAs and 50S ribosomes. The polypeptide is Peptidyl-tRNA hydrolase (Latilactobacillus sakei (Lactobacillus sakei)).